A 242-amino-acid polypeptide reads, in one-letter code: Small ribosomal subunit protein uS3 (242 aa).

A KH type-2 domain is found at 39-110 (IRRFIHKKYG…QVRINVVEVE (72 aa)). Positions 216 to 242 (QSMPVGASPRRRGNRRPQQFEDRSNEG) are disordered. The segment covering 233 to 242 (QQFEDRSNEG) has biased composition (basic and acidic residues).

The protein belongs to the universal ribosomal protein uS3 family. As to quaternary structure, part of the 30S ribosomal subunit. Forms a tight complex with proteins S10 and S14.

Its function is as follows. Binds the lower part of the 30S subunit head. Binds mRNA in the 70S ribosome, positioning it for translation. In Prochlorococcus marinus (strain MIT 9303), this protein is Small ribosomal subunit protein uS3.